A 395-amino-acid polypeptide reads, in one-letter code: Phosphoglycerate kinase (395 aa).

Residues 20–22 (DFN), Arg-36, 59–62 (HLGR), Arg-120, and Arg-157 contribute to the substrate site. ATP-binding positions include Lys-208, Gly-296, Glu-327, and 353–356 (GGDT).

It belongs to the phosphoglycerate kinase family. In terms of assembly, monomer.

The protein resides in the cytoplasm. The catalysed reaction is (2R)-3-phosphoglycerate + ATP = (2R)-3-phospho-glyceroyl phosphate + ADP. It participates in carbohydrate degradation; glycolysis; pyruvate from D-glyceraldehyde 3-phosphate: step 2/5. The polypeptide is Phosphoglycerate kinase (Tropheryma whipplei (strain TW08/27) (Whipple's bacillus)).